A 205-amino-acid polypeptide reads, in one-letter code: Small ribosomal subunit protein uS4 (205 aa).

The tract at residues M1–G49 is disordered. The S4 RNA-binding domain occupies S94–V157.

It belongs to the universal ribosomal protein uS4 family. In terms of assembly, part of the 30S ribosomal subunit. Contacts protein S5. The interaction surface between S4 and S5 is involved in control of translational fidelity.

One of the primary rRNA binding proteins, it binds directly to 16S rRNA where it nucleates assembly of the body of the 30S subunit. In terms of biological role, with S5 and S12 plays an important role in translational accuracy. In Chelativorans sp. (strain BNC1), this protein is Small ribosomal subunit protein uS4.